The sequence spans 423 residues: Growth hormone-releasing hormone receptor (423 aa).

The signal sequence occupies residues 1–22 (MDSGVWAACIFCLLSSLPVALG). Residues 23 to 130 (HVHPECDFIT…DEKSYFSTVR (108 aa)) lie on the Extracellular side of the membrane. 3 cysteine pairs are disulfide-bonded: Cys41–Cys64, Cys55–Cys96, and Cys78–Cys112. Residue Asn50 is glycosylated (N-linked (GlcNAc...) asparagine). Residues 131-151 (IVYTTGHSVSAVALFVAIAIL) traverse the membrane as a helical segment. Over 152–167 (VALRRLHCPRNYIHSQ) the chain is Cytoplasmic. Residues 168–188 (LFATFILKAGAVFLKDAALFH) traverse the membrane as a helical segment. At 189-210 (SENTDHCSFSTVLCKVSVATSH) the chain is on the extracellular side. The chain crosses the membrane as a helical span at residues 211–231 (FATMTNFSWLLAEAVYLTCLL). The Cytoplasmic portion of the chain corresponds to 232–240 (ASTSPSTRR). The helical transmembrane segment at 241 to 261 (AFWWLVLAGWGLPLLFTGTWV) threads the bilayer. Over 262-283 (GCKLAFEDVACWDLDDSSPYWW) the chain is Extracellular. The helical transmembrane segment at 284-304 (IIKGPIVLSVGVNFGLFLNII) threads the bilayer. Topologically, residues 305 to 331 (RILLRKLEPAQGSLHTQPQYWRLSKST) are cytoplasmic. Residues 332-352 (LLLIPLFGIHYVIFNFLPDSA) form a helical membrane-spanning segment. Residues 353–357 (GLGIR) are Extracellular-facing. The chain crosses the membrane as a helical span at residues 358-378 (LPLELGLGSFQGFIVAILYCF). The Cytoplasmic portion of the chain corresponds to 379–423 (LNQEVRTEISRRWHGHDPELLPAWRTHAKWAKPSRSRAKVLTTVC).

The protein belongs to the G-protein coupled receptor 2 family. As to expression, pituitary gland. Also detected in the lymphocytes and thymocytes.

It localises to the cell membrane. Functionally, receptor for GRF, coupled to G proteins which activate adenylyl cyclase. Stimulates somatotroph cell growth, growth hormone gene transcription and growth hormone secretion. In Sus scrofa (Pig), this protein is Growth hormone-releasing hormone receptor (GHRHR).